The chain runs to 286 residues: Small ribosomal subunit protein uS2 (286 aa).

The segment at lysine 257 to glycine 286 is disordered.

It belongs to the universal ribosomal protein uS2 family.

The sequence is that of Small ribosomal subunit protein uS2 from Ehrlichia ruminantium (strain Gardel).